A 424-amino-acid polypeptide reads, in one-letter code: MKPLWQQYIQIINQVVKPALGCTEPIAAAYAAAVARTLLPVAPESIAVQVSDNLYKNSMGVYVPGTGKIGLAIAAAAGALAGNADAGLEVLANVTPEQVAQAQTLIDAGKVKVERTETDEFIYCCVSLTAGEQEAMVKICGGHTLIAEKRLNGELVFTADSAQAKATGSICDGVDINIESIYRFAQEVPFEEIQFILKASELNSKLSDEGMSKPYGLEVGRTMKNGIAAGIIGEDLLNKIVMLTAAASDARMGGANLPAMSNLGSGNQGIAATIPVVITAQCYKVSEEKLARALIMSHLGAIYIKSHYPPLSAFCGNTVTSAAASMAMVYLAGGSFEQSCFAIQNVISDSSGMVCDGAKASCAMKVSTSSSAAVRSFLMALNSQNVSGQGIIAKDVEKTIKNIGKMVLNGMSSTDVTIINIMSE.

Belongs to the UPF0597 family.

The polypeptide is UPF0597 protein Shewana3_2972 (Shewanella sp. (strain ANA-3)).